The chain runs to 976 residues: Probable basic-leucine zipper transcription factor Q (976 aa).

2 coiled-coil regions span residues 57 to 110 and 136 to 287; these read AIDS…QYQQ and QQQQ…QQQQ. The tract at residues 104-128 is disordered; sequence YQQQYQQPYTTPSPPDQIDYNQQLS. 2 stretches are compositionally biased toward polar residues: residues 374 to 385 and 393 to 411; these read TNFNGTNNSTPN and KLSSNNIKNTATPLSSPPS. The disordered stretch occupies residues 374 to 499; the sequence is TNFNGTNNST…PIDSNGDFDL (126 aa). 2 stretches are compositionally biased toward low complexity: residues 420-468 and 476-490; these read PKNN…FNNN and STTTPTITSPNMTSP. Positions 504 to 567 constitute a bZIP domain; the sequence is EKKKSISRIN…GVEVMRPEPE (64 aa). Residues 505-507 form a basic motif region; that stretch reads KKK. The leucine-zipper stretch occupies residues 509–516; it reads ISRINQNL. A compositionally biased stretch (low complexity) spans 855–938; the sequence is ENQSNNFGNN…VNSNNNNFNN (84 aa). Residues 855 to 957 are disordered; the sequence is ENQSNNFGNN…SADAIPYPST (103 aa).

Belongs to the bZIP family.

It is found in the nucleus. Functionally, probable transcriptional regulator. This chain is Probable basic-leucine zipper transcription factor Q (bzpQ), found in Dictyostelium discoideum (Social amoeba).